Reading from the N-terminus, the 468-residue chain is 6-phosphogluconate dehydrogenase, decarboxylating (468 aa).

NADP(+) is bound by residues 10-15, 33-35, 74-76, and N102; these read GMAVMG, NRS, and VKA. Substrate contacts are provided by residues N102 and 128 to 130; that span reads SGG. K183 serves as the catalytic Proton acceptor. 186 to 187 lines the substrate pocket; the sequence is HN. The Proton donor role is filled by E190. Positions 191, 260, 287, 445, and 451 each coordinate substrate.

It belongs to the 6-phosphogluconate dehydrogenase family. Homodimer.

The catalysed reaction is 6-phospho-D-gluconate + NADP(+) = D-ribulose 5-phosphate + CO2 + NADPH. It participates in carbohydrate degradation; pentose phosphate pathway; D-ribulose 5-phosphate from D-glucose 6-phosphate (oxidative stage): step 3/3. Its function is as follows. Catalyzes the oxidative decarboxylation of 6-phosphogluconate to ribulose 5-phosphate and CO(2), with concomitant reduction of NADP to NADPH. In Klebsiella pneumoniae, this protein is 6-phosphogluconate dehydrogenase, decarboxylating (gnd).